A 408-amino-acid polypeptide reads, in one-letter code: LL-diaminopimelate aminotransferase (408 aa).

Positions 15 and 42 each coordinate substrate. Residues Tyr72, 108 to 109 (SK), Tyr132, Asn187, Tyr218, and 246 to 248 (SFS) each bind pyridoxal 5'-phosphate. Residues Lys109, Tyr132, and Asn187 each contribute to the substrate site. Lys249 is subject to N6-(pyridoxal phosphate)lysine. 2 residues coordinate pyridoxal 5'-phosphate: Arg257 and Asn292. Substrate contacts are provided by Asn292 and Arg388.

It belongs to the class-I pyridoxal-phosphate-dependent aminotransferase family. LL-diaminopimelate aminotransferase subfamily. In terms of assembly, homodimer. Pyridoxal 5'-phosphate is required as a cofactor.

The catalysed reaction is (2S,6S)-2,6-diaminopimelate + 2-oxoglutarate = (S)-2,3,4,5-tetrahydrodipicolinate + L-glutamate + H2O + H(+). The protein operates within amino-acid biosynthesis; L-lysine biosynthesis via DAP pathway; LL-2,6-diaminopimelate from (S)-tetrahydrodipicolinate (aminotransferase route): step 1/1. Functionally, involved in the synthesis of meso-diaminopimelate (m-DAP or DL-DAP), required for both lysine and peptidoglycan biosynthesis. Catalyzes the direct conversion of tetrahydrodipicolinate to LL-diaminopimelate. The protein is LL-diaminopimelate aminotransferase of Leptospira interrogans serogroup Icterohaemorrhagiae serovar Lai (strain 56601).